Here is a 164-residue protein sequence, read N- to C-terminus: 2-C-methyl-D-erythritol 2,4-cyclodiphosphate synthase (164 aa).

Residues D9 and H11 each coordinate a divalent metal cation. Residues 9-11 (DAH) and 36-37 (HS) each bind 4-CDP-2-C-methyl-D-erythritol 2-phosphate. H44 is an a divalent metal cation binding site. 4-CDP-2-C-methyl-D-erythritol 2-phosphate-binding positions include 58–60 (DLG), 63–67 (FPDSD), 134–137 (TTTE), F141, and R144.

The protein belongs to the IspF family. In terms of assembly, homotrimer. A divalent metal cation serves as cofactor.

It catalyses the reaction 4-CDP-2-C-methyl-D-erythritol 2-phosphate = 2-C-methyl-D-erythritol 2,4-cyclic diphosphate + CMP. It functions in the pathway isoprenoid biosynthesis; isopentenyl diphosphate biosynthesis via DXP pathway; isopentenyl diphosphate from 1-deoxy-D-xylulose 5-phosphate: step 4/6. Functionally, involved in the biosynthesis of isopentenyl diphosphate (IPP) and dimethylallyl diphosphate (DMAPP), two major building blocks of isoprenoid compounds. Catalyzes the conversion of 4-diphosphocytidyl-2-C-methyl-D-erythritol 2-phosphate (CDP-ME2P) to 2-C-methyl-D-erythritol 2,4-cyclodiphosphate (ME-CPP) with a corresponding release of cytidine 5-monophosphate (CMP). This Alkalilimnicola ehrlichii (strain ATCC BAA-1101 / DSM 17681 / MLHE-1) protein is 2-C-methyl-D-erythritol 2,4-cyclodiphosphate synthase.